The following is a 432-amino-acid chain: Enolase (432 aa).

Gln-164 serves as a coordination point for (2R)-2-phosphoglycerate. Glu-206 functions as the Proton donor in the catalytic mechanism. Residues Asp-243, Glu-284, and Asp-311 each coordinate Mg(2+). Residues Lys-336, Arg-365, Ser-366, and Lys-387 each coordinate (2R)-2-phosphoglycerate. The active-site Proton acceptor is Lys-336.

This sequence belongs to the enolase family. The cofactor is Mg(2+).

It is found in the cytoplasm. The protein resides in the secreted. The protein localises to the cell surface. It carries out the reaction (2R)-2-phosphoglycerate = phosphoenolpyruvate + H2O. Its pathway is carbohydrate degradation; glycolysis; pyruvate from D-glyceraldehyde 3-phosphate: step 4/5. Functionally, catalyzes the reversible conversion of 2-phosphoglycerate (2-PG) into phosphoenolpyruvate (PEP). It is essential for the degradation of carbohydrates via glycolysis. In Synechococcus sp. (strain JA-3-3Ab) (Cyanobacteria bacterium Yellowstone A-Prime), this protein is Enolase.